Consider the following 550-residue polypeptide: Copine-F (550 aa).

2 consecutive C2 domains span residues 1–115 (MAET…RLIG) and 123–246 (ITGK…PIIN). The 226-residue stretch at 296 to 521 (DLMVAIDCTE…DFQNEILRKL (226 aa)) folds into the VWFA domain.

It belongs to the copine family.

The polypeptide is Copine-F (cpnF) (Dictyostelium discoideum (Social amoeba)).